The following is a 128-amino-acid chain: Fluoride-specific ion channel FluC (128 aa).

4 helical membrane passes run 5 to 25 (IVAI…LSLA), 35 to 55 (LGTL…AVVF), 67 to 87 (LFVI…SVEV), and 96 to 116 (FGWA…LTAL). Na(+) is bound by residues Gly-75 and Thr-78.

The protein belongs to the fluoride channel Fluc/FEX (TC 1.A.43) family.

It localises to the cell inner membrane. The catalysed reaction is fluoride(in) = fluoride(out). Its activity is regulated as follows. Na(+) is not transported, but it plays an essential structural role and its presence is essential for fluoride channel function. Its function is as follows. Fluoride-specific ion channel. Important for reducing fluoride concentration in the cell, thus reducing its toxicity. This Burkholderia cenocepacia (strain HI2424) protein is Fluoride-specific ion channel FluC.